A 415-amino-acid polypeptide reads, in one-letter code: MERSAVASGFHRNYILCASRAATSTTRLHSLSSLRNFPSSSLRIRHCPSPISSNFIVSEVSRNRRCDAVSSSTTDVTELAEIDWDKIDFGLKPTDYMYAMKCSRDGEFSQGQLQPFGNIDINPAAGVLNYGQGLFEGLKAYRKQDGNILLFRPEENAIRMRNGAERMCMPSPTVEQFVEAVKTTVLANKRWIPPPGKGSLYIRPLLMGTGAVLGLAPAPEYTFLIFVSPVGNYFKEGVAPINLIVETEFHRATPGGTGGVKTIGNYAAVLKAQSIAKAKGYSDVLYLDCLHKRYLEEVSSCNIFIVKDNVISTPEIKGTILPGITRKSIIEVARSQGFKVEERNVTVDELVEADEVFCTGTAVVLSPVGSITYKSQRFSYGEDGFGTVSKQLYTSLTSLQMGLSEDNMNWTVQLS.

A chloroplast-targeting transit peptide spans 1-65 (MERSAVASGF…IVSEVSRNRR (65 aa)). Lysine 261 is subject to N6-(pyridoxal phosphate)lysine.

It belongs to the class-IV pyridoxal-phosphate-dependent aminotransferase family. Pyridoxal 5'-phosphate serves as cofactor.

It is found in the plastid. The protein resides in the chloroplast. It carries out the reaction L-leucine + 2-oxoglutarate = 4-methyl-2-oxopentanoate + L-glutamate. The enzyme catalyses L-isoleucine + 2-oxoglutarate = (S)-3-methyl-2-oxopentanoate + L-glutamate. The catalysed reaction is L-valine + 2-oxoglutarate = 3-methyl-2-oxobutanoate + L-glutamate. It functions in the pathway amino-acid biosynthesis; L-isoleucine biosynthesis; L-isoleucine from 2-oxobutanoate: step 4/4. It participates in amino-acid biosynthesis; L-leucine biosynthesis; L-leucine from 3-methyl-2-oxobutanoate: step 4/4. Its pathway is amino-acid biosynthesis; L-valine biosynthesis; L-valine from pyruvate: step 4/4. In terms of biological role, converts 2-oxo acids to branched-chain amino acids. Acts on leucine, isoleucine and valine. The protein is Branched-chain-amino-acid aminotransferase 5, chloroplastic (BCAT5) of Arabidopsis thaliana (Mouse-ear cress).